Consider the following 779-residue polypeptide: Mesenchyme-specific cell surface glycoprotein (779 aa).

Residues 1–15 (MQFGVPLLVLCLALG) form the signal peptide. N-linked (GlcNAc...) asparagine glycosylation is found at Asn-203 and Asn-234. Residues 249 to 363 (AGFPRGTTWS…QYPMIPTTPL (115 aa)) are disordered. The segment covering 262 to 351 (GAGGQGGQGQ…GGQGGQGGGN (90 aa)) has biased composition (gly residues). 3 N-linked (GlcNAc...) asparagine glycosylation sites follow: Asn-369, Asn-451, and Asn-609.

In terms of tissue distribution, restricted to the primary mesenchyme cell lineage.

Its subcellular location is the cell membrane. In terms of biological role, not known. Could be involved in mesenchyme cell migration, adhesion, fusion, or spicule formation. The chain is Mesenchyme-specific cell surface glycoprotein from Strongylocentrotus purpuratus (Purple sea urchin).